Reading from the N-terminus, the 284-residue chain is Aquaporin NIP1-1 (284 aa).

Polar residues predominate over residues 1–12; sequence MAGGDNNSQTTN. The tract at residues 1 to 28 is disordered; it reads MAGGDNNSQTTNGGSGHEQRAMEEGRKQ. Over residues 17–28 the composition is skewed to basic and acidic residues; sequence HEQRAMEEGRKQ. The next 2 helical transmembrane spans lie at 50 to 70 and 78 to 98; these read IIAE…AVTI and ITFP…VYAV. An NPA 1 motif is present at residues 107-109; the sequence is NPA. 3 helical membrane-spanning segments follow: residues 129 to 149, 166 to 186, and 194 to 214; these read AAAQ…MFGG, SLVL…GVAT, and LAGL…GPIS. The NPA 2 signature appears at 219-221; sequence NPA. Residues 236-256 form a helical membrane-spanning segment; the sequence is IWVYIVGPVAGAVAGAWAYNI.

This sequence belongs to the MIP/aquaporin (TC 1.A.8) family. NIP (TC 1.A.8.12) subfamily. In terms of tissue distribution, expressed in leaves and at lower levels in roots and anthers.

It localises to the membrane. In terms of biological role, aquaporins facilitate the transport of water and small neutral solutes across cell membranes. This chain is Aquaporin NIP1-1 (NIP1-1), found in Oryza sativa subsp. japonica (Rice).